Here is a 537-residue protein sequence, read N- to C-terminus: Cryptic loci regulator 2 (537 aa).

The interval 96–116 (VSARHVRPNPKSSKDTLEKQP) is disordered. Basic and acidic residues predominate over residues 107–116 (SSKDTLEKQP).

Interacts with clr3.

It is found in the nucleus. It localises to the chromosome. Its subcellular location is the centromere. The protein localises to the telomere. Required for deacetylation in the mating-type region and the centromere. Acts upstream of the histone deacetylases to promote transcriptional silencing. Required for proper positioning of nucleosomes at heterochromatic loci and for transcriptional gene silencing (TGS) function of the Snf2/Hdac-containing repressor complex (SHREC). The chain is Cryptic loci regulator 2 (clr2) from Schizosaccharomyces pombe (strain 972 / ATCC 24843) (Fission yeast).